We begin with the raw amino-acid sequence, 144 residues long: Large ribosomal subunit protein eL27 (144 aa).

A KOW domain is found at 6–43 (IKPGRLVILLNGKYAGRKAVVIKTFDDATASKSRPYGH).

It belongs to the eukaryotic ribosomal protein eL27 family.

This is Large ribosomal subunit protein eL27 (rpl27) from Dictyostelium discoideum (Social amoeba).